Here is a 335-residue protein sequence, read N- to C-terminus: Mycobacterial beta-ketoacyl-[acyl-carrier-protein] synthase III (335 aa).

Catalysis depends on residues C122 and H258. The interval 259–263 (QANSR) is ACP-binding. The active site involves N289.

The protein belongs to the thiolase-like superfamily. FabH family. Homodimer.

The protein localises to the cytoplasm. The enzyme catalyses malonyl-[ACP] + dodecanoyl-CoA + H(+) = 3-oxotetradecanoyl-[ACP] + CO2 + CoA. It participates in lipid metabolism; fatty acid biosynthesis. It functions in the pathway lipid metabolism; mycolic acid biosynthesis. Catalyzes the condensation reaction of fatty acid synthesis by the addition to an acyl acceptor of two carbons from malonyl-ACP. Catalyzes the first condensation reaction which initiates fatty acid synthesis and may therefore play a role in governing the total rate of fatty acid production. Possesses both acetoacetyl-ACP synthase and acetyl transacylase activities. Its substrate specificity determines the biosynthesis of branched-chain and/or straight-chain of fatty acids. The polypeptide is Mycobacterial beta-ketoacyl-[acyl-carrier-protein] synthase III (Mycobacterium avium (strain 104)).